The chain runs to 32 residues: MSDIN-like toxin proprotein 11 (32 aa).

Positions 1-10 (MSDINATRLP) are excised as a propeptide. Residues 1 to 32 (MSDINATRLPGMEPPSPMPCVGDADNFTLTRG) form a disordered region. A cross-link (cyclopeptide (Gly-Pro)) is located at residues 11–19 (GMEPPSPMP). Positions 20–32 (CVGDADNFTLTRG) are excised as a propeptide.

It belongs to the MSDIN fungal toxin family. Post-translationally, processed by the macrocyclase-peptidase enzyme POPB to yield a toxic cyclic nonapeptide. POPB first removes 10 residues from the N-terminus. Conformational trapping of the remaining peptide forces the enzyme to release this intermediate rather than proceed to macrocyclization. The enzyme rebinds the remaining peptide in a different conformation and catalyzes macrocyclization of the N-terminal 9 residues.

Probable toxin that belongs to the MSDIN-like toxin family responsible for a large number of food poisoning cases and deaths. This chain is MSDIN-like toxin proprotein 11, found in Amanita bisporigera (Destroying angel).